We begin with the raw amino-acid sequence, 589 residues long: NADPH-dependent diflavin oxidoreductase 1 (589 aa).

The 147-residue stretch at 5 to 151 folds into the Flavodoxin-like domain; the sequence is ITILYGSETG…YYIEWEAELI (147 aa). FMN is bound by residues 11–16, 60–63, 98–107, and Glu-133; these read SETGNA, STTG, and VGDSSYVKYN. An FAD-binding FR-type domain is found at 202–439; that stretch reads DGLKLGTVLE…SIQRSSFKYK (238 aa). FAD-binding positions include Arg-349, 380 to 383, and 412 to 415; these read RMFS and GVCT. Residues Thr-452 and 507 to 508 each bind NADP(+); that span reads SR. Trp-589 provides a ligand contact to FAD.

This sequence belongs to the NADPH-dependent diflavin oxidoreductase NDOR1 family. It in the N-terminal section; belongs to the flavodoxin family. The protein in the C-terminal section; belongs to the flavoprotein pyridine nucleotide cytochrome reductase family. As to quaternary structure, interacts with DRE2; as part of the cytosolic iron-sulfur (Fe-S) protein assembly (CIA) machinery. Requires FAD as cofactor. The cofactor is FMN.

It is found in the cytoplasm. The protein resides in the mitochondrion. The catalysed reaction is 2 oxidized [2Fe-2S]-[protein] + NADPH = 2 reduced [2Fe-2S]-[protein] + NADP(+) + H(+). Its function is as follows. NADPH-dependent reductase which is a central component of the cytosolic iron-sulfur (Fe-S) protein assembly (CIA) machinery. Transfers electrons from NADPH via its FAD and FMN prosthetic groups to the [2Fe-2S] cluster of DRE2, another key component of the CIA machinery. In turn, this reduced cluster provides electrons for assembly of cytosolic iron-sulfur cluster proteins. Positively controls H(2)O(2)-induced cell death. This Candida albicans (strain SC5314 / ATCC MYA-2876) (Yeast) protein is NADPH-dependent diflavin oxidoreductase 1.